The sequence spans 430 residues: Serine--tRNA ligase (430 aa).

An L-serine-binding site is contributed by threonine 237–glutamate 239. ATP is bound at residue arginine 268 to glutamate 270. Glutamate 291 is an L-serine binding site. Glutamate 355 to serine 358 lines the ATP pocket. Serine 391 provides a ligand contact to L-serine.

Belongs to the class-II aminoacyl-tRNA synthetase family. Type-1 seryl-tRNA synthetase subfamily. In terms of assembly, homodimer. The tRNA molecule binds across the dimer.

Its subcellular location is the cytoplasm. The catalysed reaction is tRNA(Ser) + L-serine + ATP = L-seryl-tRNA(Ser) + AMP + diphosphate + H(+). It carries out the reaction tRNA(Sec) + L-serine + ATP = L-seryl-tRNA(Sec) + AMP + diphosphate + H(+). It functions in the pathway aminoacyl-tRNA biosynthesis; selenocysteinyl-tRNA(Sec) biosynthesis; L-seryl-tRNA(Sec) from L-serine and tRNA(Sec): step 1/1. In terms of biological role, catalyzes the attachment of serine to tRNA(Ser). Is also able to aminoacylate tRNA(Sec) with serine, to form the misacylated tRNA L-seryl-tRNA(Sec), which will be further converted into selenocysteinyl-tRNA(Sec). The sequence is that of Serine--tRNA ligase from Serratia proteamaculans (strain 568).